Consider the following 585-residue polypeptide: Arginine--tRNA ligase (585 aa).

The 'HIGH' region motif lies at 126–136 (PNIAKEMHVGH).

This sequence belongs to the class-I aminoacyl-tRNA synthetase family. In terms of assembly, monomer.

It is found in the cytoplasm. The enzyme catalyses tRNA(Arg) + L-arginine + ATP = L-arginyl-tRNA(Arg) + AMP + diphosphate. The protein is Arginine--tRNA ligase of Crocosphaera subtropica (strain ATCC 51142 / BH68) (Cyanothece sp. (strain ATCC 51142)).